A 239-amino-acid polypeptide reads, in one-letter code: Ribonuclease 3 (239 aa).

One can recognise an RNase III domain in the interval 11-133 (HTAIQKKLGY…MFAAVSFDAD (123 aa)). A Mg(2+)-binding site is contributed by E46. The active site involves D50. The Mg(2+) site is built by D119 and E122. E122 is an active-site residue. In terms of domain architecture, DRBM spans 160–230 (DGKTALQEAL…AKEALKWLEE (71 aa)).

It belongs to the ribonuclease III family. As to quaternary structure, homodimer. The cofactor is Mg(2+).

It localises to the cytoplasm. It catalyses the reaction Endonucleolytic cleavage to 5'-phosphomonoester.. In terms of biological role, digests double-stranded RNA. Involved in the processing of primary rRNA transcript to yield the immediate precursors to the large and small rRNAs (23S and 16S). Processes some mRNAs, and tRNAs when they are encoded in the rRNA operon. Processes pre-crRNA and tracrRNA of type II CRISPR loci if present in the organism. This Neisseria gonorrhoeae (strain ATCC 700825 / FA 1090) protein is Ribonuclease 3.